Reading from the N-terminus, the 469-residue chain is Ectonucleoside triphosphate diphosphohydrolase 5 (469 aa).

A signal peptide spans 1-24; the sequence is MATPWGAVFFLLMIACAGSTVFYR. The active-site Proton acceptor is Glu-172. N-linked (GlcNAc...) asparagine glycosylation is present at Asn-232. 2 cysteine pairs are disulfide-bonded: Cys-272–Cys-303 and Cys-363–Cys-377.

It belongs to the GDA1/CD39 NTPase family. Monomer; active form. Homodimer; disulfide-linked. Homodimers are enzymatically inactive. It depends on Ca(2+) as a cofactor. Requires Mg(2+) as cofactor. In terms of processing, N-glycosylated; high-mannose type. Expressed in fetal cells and most adult tissues.

The protein resides in the endoplasmic reticulum. Its subcellular location is the secreted. It carries out the reaction a ribonucleoside 5'-diphosphate + H2O = a ribonucleoside 5'-phosphate + phosphate + H(+). The catalysed reaction is GDP + H2O = GMP + phosphate + H(+). It catalyses the reaction UDP + H2O = UMP + phosphate + H(+). The enzyme catalyses IDP + H2O = IMP + phosphate + H(+). It carries out the reaction CDP + H2O = CMP + phosphate + H(+). The catalysed reaction is ADP + H2O = AMP + phosphate + H(+). It participates in protein modification; protein glycosylation. Hydrolyzes nucleoside diphosphates with a preference for GDP, IDP and UDP compared to ADP and CDP. In the lumen of the endoplasmic reticulum, hydrolyzes UDP that acts as an end-product feedback inhibitor of the UDP-Glc:glycoprotein glucosyltransferases. UMP can be transported back by an UDP-sugar antiporter to the cytosol where it is consumed to regenerate UDP-glucose. Therefore, it positively regulates protein reglucosylation by clearing UDP from the ER lumen and by promoting the regeneration of UDP-glucose. Protein reglucosylation is essential to proper glycoprotein folding and quality control in the ER. The protein is Ectonucleoside triphosphate diphosphohydrolase 5 (ENTPD5) of Mesocricetus auratus (Golden hamster).